The sequence spans 142 residues: Tol-Pal system protein TolR (142 aa).

The Cytoplasmic segment spans residues 1–17 (MARARGRGRRDLKSEIN). A helical transmembrane segment spans residues 18-38 (IVPLLDVLLVLLLIFMATAPI). The Periplasmic portion of the chain corresponds to 39-142 (ITQSVEVDLP…KSVGLMTQPI (104 aa)).

It belongs to the ExbD/TolR family. In terms of assembly, the Tol-Pal system is composed of five core proteins: the inner membrane proteins TolA, TolQ and TolR, the periplasmic protein TolB and the outer membrane protein Pal. They form a network linking the inner and outer membranes and the peptidoglycan layer.

The protein localises to the cell inner membrane. Functionally, part of the Tol-Pal system, which plays a role in outer membrane invagination during cell division and is important for maintaining outer membrane integrity. Required, with TolQ, for the proton motive force-dependent activation of TolA and for TolA-Pal interaction. The protein is Tol-Pal system protein TolR of Escherichia coli O157:H7.